Reading from the N-terminus, the 92-residue chain is MSVEEISEKLKVDKLAICSDEISTVGLEPDLAAELKELIYVLVPAESFQGYLAVDGQYVVFRRDSRKCVLAIVEEERVRWCLRRLEEVLNGS.

This is an uncharacterized protein from Archaeoglobus fulgidus (strain ATCC 49558 / DSM 4304 / JCM 9628 / NBRC 100126 / VC-16).